Here is a 162-residue protein sequence, read N- to C-terminus: Caveolin-2 (162 aa).

Topologically, residues 1 to 86 (MGLETEKADV…FEISKYVLYK (86 aa)) are cytoplasmic. Residue Tyr-19 is modified to Phosphotyrosine; by SRC. 2 positions are modified to phosphoserine: Ser-20 and Ser-23. At Tyr-27 the chain carries Phosphotyrosine; by SRC. Phosphoserine is present on Ser-36. Residues 87-107 (FLTVFLAIPLAFVAGILFATL) constitute an intramembrane region (helical). Residues 108 to 162 (SCLHIWIIMPFVKTCLMVLPSVQTIWKSVTDVIIAPLCTSVGRSFSSISLRLSQD) lie on the Cytoplasmic side of the membrane.

The protein belongs to the caveolin family. As to quaternary structure, monomer or homodimer. Interacts with CAV1; the interaction forms a stable heterooligomeric complex that is required for targeting to lipid rafts and for caveolae formation. Tyrosine phosphorylated forms do not form heterooligomers with the Tyr-19-phosphorylated form existing as a monomer or dimer, and the Tyr-27-form as a monomer only. Interacts (tyrosine phosphorylated form) with the SH2 domain-containing proteins, RASA1, NCK1 and SRC. Interacts (tyrosine phosphorylated form) with INSR, the interaction (Tyr-27-phosphorylated form) is increased on insulin stimulation. Interacts (Tyr-19 phosphorylated form) with MAPK1 (phosphorylated form); the interaction, promoted by insulin, leads to nuclear location and MAPK1 activation. Interacts with STAT3; the interaction is increased on insulin-induced tyrosine phosphorylation leading to STAT activation. Phosphorylated on serine and tyrosine residues. CAV1 promotes phosphorylation on Ser-23 which then targets the complex to the plasma membrane, lipid rafts and caveolae. Phosphorylation on Ser-36 appears to modulate mitosis in endothelial cells. Phosphorylation on both Tyr-19 and Tyr-27 is required for insulin-induced 'Ser-727' phosphorylation of STAT3 and its activation. Phosphorylation on Tyr-19 is required for insulin-induced phosphorylation of MAPK1 and DNA binding of STAT3. Tyrosine phosphorylation is induced by both EGF and insulin (By. similarity).

It localises to the nucleus. The protein localises to the cytoplasm. The protein resides in the golgi apparatus membrane. Its subcellular location is the cell membrane. It is found in the membrane. It localises to the caveola. May act as a scaffolding protein within caveolar membranes. Interacts directly with G-protein alpha subunits and can functionally regulate their activity. Acts as an accessory protein in conjunction with CAV1 in targeting to lipid rafts and driving caveolae formation. The Ser-36 phosphorylated form has a role in modulating mitosis in endothelial cells. Positive regulator of cellular mitogenesis of the MAPK signaling pathway. Required for the insulin-stimulated nuclear translocation and activation of MAPK1 and STAT3, and the subsequent regulation of cell cycle progression. This chain is Caveolin-2 (CAV2), found in Otolemur garnettii (Small-eared galago).